We begin with the raw amino-acid sequence, 1061 residues long: RecBCD enzyme subunit RecC (1061 aa).

Belongs to the RecC family. As to quaternary structure, heterotrimer of RecB, RecC and RecD. All subunits contribute to DNA-binding.

A helicase/nuclease that prepares dsDNA breaks (DSB) for recombinational DNA repair. Binds to DSBs and unwinds DNA via a highly rapid and processive ATP-dependent bidirectional helicase activity. Unwinds dsDNA until it encounters a Chi (crossover hotspot instigator) sequence from the 3' direction. Cuts ssDNA a few nucleotides 3' to the Chi site. The properties and activities of the enzyme are changed at Chi. The Chi-altered holoenzyme produces a long 3'-ssDNA overhang and facilitates RecA-binding to the ssDNA for homologous DNA recombination and repair. Holoenzyme degrades any linearized DNA that is unable to undergo homologous recombination. In the holoenzyme this subunit recognizes the wild-type Chi sequence, and when added to isolated RecB increases its ATP-dependent helicase processivity. In Buchnera aphidicola subsp. Schizaphis graminum (strain Sg), this protein is RecBCD enzyme subunit RecC.